Here is a 132-residue protein sequence, read N- to C-terminus: Agouti-signaling protein (132 aa).

The signal sequence occupies residues Met1–Ser22. An N-linked (GlcNAc...) asparagine glycan is attached at Asn39. A disordered region spans residues Lys61–Cys93. A compositionally biased stretch (basic and acidic residues) spans Arg64–Lys79. 5 disulfides stabilise this stretch: Cys93-Cys108, Cys100-Cys114, Cys107-Cys125, Cys111-Cys132, and Cys116-Cys123. Residues Cys93–Cys132 enclose the Agouti domain.

The protein resides in the secreted. Functionally, involved in the regulation of melanogenesis. The binding of ASP to MC1R precludes alpha-MSH initiated signaling and thus blocks production of cAMP, leading to a down-regulation of eumelanogenesis (brown/black pigment) and thus increasing synthesis of pheomelanin (yellow/red pigment). The chain is Agouti-signaling protein (ASIP) from Callithrix geoffroyi (Geoffroy's marmoset).